The chain runs to 68 residues: U-poneritoxin(01)-Om4a (68 aa).

The signal sequence occupies residues 1–25; sequence MKPSSLTLAFLVVFMMAIMYNSVQA. Positions 26 to 39 are excised as a propeptide; the sequence is EALADADAEAFAEA.

This sequence belongs to the formicidae venom precursor-01 superfamily. As to quaternary structure, homo- or heterodimer with PLP7 (AC A0A348G6I9); disulfide-linked. Truncated sequences of this peptide have also been found in the venom. It is possible they have been cleaved in the venom. Expressed by the venom gland.

It is found in the secreted. Its function is as follows. This homodimer composed of two cationic amphipathic alpha-helical peptides has antimicrobial activities against E.coli (MIC=3.1 uM), S.aureus (MIC=3.1 uM), and S.cerevisiae (MIC=3.1 uM). It also shows histamine-releasing activity (66.4% at 10 uM) and a weak hemolytic activity (10.5% at 50 uM). The sequence is that of U-poneritoxin(01)-Om4a from Odontomachus monticola (Trap-jaw ant).